A 502-amino-acid polypeptide reads, in one-letter code: Glutamate--tRNA ligase (502 aa).

Positions proline 9 to threonine 19 match the 'HIGH' region motif. Positions lysine 250–arginine 254 match the 'KMSKS' region motif. ATP is bound at residue lysine 253.

Belongs to the class-I aminoacyl-tRNA synthetase family. Glutamate--tRNA ligase type 1 subfamily. In terms of assembly, monomer.

Its subcellular location is the cytoplasm. It carries out the reaction tRNA(Glu) + L-glutamate + ATP = L-glutamyl-tRNA(Glu) + AMP + diphosphate. Functionally, catalyzes the attachment of glutamate to tRNA(Glu) in a two-step reaction: glutamate is first activated by ATP to form Glu-AMP and then transferred to the acceptor end of tRNA(Glu). The chain is Glutamate--tRNA ligase from Acinetobacter baumannii (strain SDF).